The chain runs to 491 residues: MTQVLVRNGIQAVGDGLTSLIIVGKKSVLKNVTFEGKFKEVAQKFVTDGDSWNSMISRIPASGRHPLHYELAHLITVPDASSRGNTPTNAHSIYKELKPINYPEDTKNVHFVLFAEYPDVLSHVAAIARTFCKFSMKTSGIRELNVNIDVVCDKLTNEDAVFLTDLSESVRETARLIDTPANILTTDALVDEAVKVGNATGSKITVIRGEELLKAGFGGIYHVGKAGPTPPAFVVLSHEVPGSTEHIALVGKGVVYDTGGLQIKTKTGMPNMKRDMGGAAGMLEAYSALVKHGFSQTLHACLCIVENNVSPIANKPDDIIKMLSGKTVEINNTDAEGRLILADGVFYAKETLKATTIFDMATLTGAQAWLSGRLHGAAMTNDEQLENEIIKAGKASGDLVAPMLFAPDLFFGDLKSSIADMKNSNLGKMDGPPSAVAGLFIGAHIGFGEGLRWLHLDIAAPAEVGDRGTGYGPALFSTLLGKYTSVPMLKQ.

The Zn(2+) site is built by K252 and D257. K264 is a catalytic residue. D275, D334, and E336 together coordinate Zn(2+). The active site involves R338.

Belongs to the peptidase M17 family. Zn(2+) is required as a cofactor. In terms of tissue distribution, expressed in the buccal cavity, pharynx, anterior gut and rectum.

It carries out the reaction Release of an N-terminal amino acid, Xaa-|-Yaa-, in which Xaa is preferably Leu, but may be other amino acids including Pro although not Arg or Lys, and Yaa may be Pro. Amino acid amides and methyl esters are also readily hydrolyzed, but rates on arylamides are exceedingly low.. Its function is as follows. Probably acts as a digestive enzyme. This chain is Leucine aminopeptidase 1 (lap-1), found in Caenorhabditis elegans.